Reading from the N-terminus, the 64-residue chain is Beta-defensin 5 (64 aa).

The first 22 residues, 1 to 22 (MRLHHLLLVLLFLVLSAGSGFT), serve as a signal peptide directing secretion. Residue Gln23 is modified to Pyrrolidone carboxylic acid. 3 disulfides stabilise this stretch: Cys31-Cys60, Cys38-Cys53, and Cys43-Cys61.

It belongs to the beta-defensin family. Neutrophilic granules. Alveolar macrophages.

It is found in the secreted. In terms of biological role, has bactericidal activity. Active against E.coli ML35 but not against S.aureus 502A. This is Beta-defensin 5 (DEFB5) from Bos taurus (Bovine).